The chain runs to 75 residues: MLIPYDQLEAETLTRLIEDFVTRDGTDNGDDTPLETRVLRVRQALAKGQAFILFDMESQQCQLLARHEVPRELLD.

Belongs to the UPF0270 family.

The polypeptide is UPF0270 protein PSEEN1465 (Pseudomonas entomophila (strain L48)).